Consider the following 453-residue polypeptide: Ribulose bisphosphate carboxylase large chain (453 aa).

A propeptide spanning residues 1–2 (MS) is cleaved from the precursor. P3 is modified (N-acetylproline). N6,N6,N6-trimethyllysine is present on K14. Residues N123 and T173 each coordinate substrate. The active-site Proton acceptor is K175. Substrate is bound at residue K177. 3 residues coordinate Mg(2+): K201, D203, and E204. Position 201 is an N6-carboxylysine (K201). Residue H294 is the Proton acceptor of the active site. Residues R295, H327, and S379 each contribute to the substrate site.

This sequence belongs to the RuBisCO large chain family. Type I subfamily. In terms of assembly, heterohexadecamer of 8 large chains and 8 small chains; disulfide-linked. The disulfide link is formed within the large subunit homodimers. Mg(2+) serves as cofactor. In terms of processing, the disulfide bond which can form in the large chain dimeric partners within the hexadecamer appears to be associated with oxidative stress and protein turnover.

It localises to the plastid. The protein localises to the chloroplast. It catalyses the reaction 2 (2R)-3-phosphoglycerate + 2 H(+) = D-ribulose 1,5-bisphosphate + CO2 + H2O. The catalysed reaction is D-ribulose 1,5-bisphosphate + O2 = 2-phosphoglycolate + (2R)-3-phosphoglycerate + 2 H(+). Functionally, ruBisCO catalyzes two reactions: the carboxylation of D-ribulose 1,5-bisphosphate, the primary event in carbon dioxide fixation, as well as the oxidative fragmentation of the pentose substrate in the photorespiration process. Both reactions occur simultaneously and in competition at the same active site. In Hydnophytum formicarum (Ant plant), this protein is Ribulose bisphosphate carboxylase large chain.